The chain runs to 174 residues: Sarcoplasmic calcium-binding protein (174 aa).

At serine 1 the chain carries N-acetylserine. 4 consecutive EF-hand domains span residues 3–38 (LWVQKMKTYFNRIDFDKDGAITRKDFESMATRFAKE), 55–90 (GVWDKFLANVAGGKGIDQATFISSMKEKVKDPNAKA), 91–126 (VVEGPLPLFFRAVDTNEDNMISRDEYGIFFNMLGLN), and 125–160 (LNPDMAPASFDAIDTNNDGLLSQEEFVTAGSDFFIN). Aspartate 16, aspartate 18, aspartate 20, and aspartate 27 together coordinate Ca(2+). Ca(2+) contacts are provided by aspartate 104, asparagine 106, aspartate 108, methionine 110, glutamate 115, aspartate 138, asparagine 140, aspartate 142, and glutamate 149.

In terms of biological role, like parvalbumins, SCPs seem to be more abundant in fast contracting muscles, but no functional relationship can be established from this distribution. The chain is Sarcoplasmic calcium-binding protein from Perinereis vancaurica tetradentata (Sandworm).